Reading from the N-terminus, the 87-residue chain is Toxin Cll3 (87 aa).

Positions 1-19 are cleaved as a signal peptide; it reads MNSLLMITACLAVIGTVWA. One can recognise an LCN-type CS-alpha/beta domain in the interval 20–85; that stretch reads KEGYIVNYYD…VWPLPNKTCY (66 aa). Cystine bridges form between C31-C84, C35-C60, C44-C65, and C48-C67. Y85 is modified (tyrosine amide).

Belongs to the long (4 C-C) scorpion toxin superfamily. Sodium channel inhibitor family. Beta subfamily. As to expression, expressed by the venom gland.

The protein resides in the secreted. In terms of biological role, beta toxins bind voltage-independently at site-4 of sodium channels (Nav) and shift the voltage of activation toward more negative potentials thereby affecting sodium channel activation and promoting spontaneous and repetitive firing. This is Toxin Cll3 from Centruroides limpidus (Mexican scorpion).